We begin with the raw amino-acid sequence, 511 residues long: Inositol-3-phosphate synthase isozyme 1 (511 aa).

Positions 71, 72, 73, 74, 144, 181, 191, 194, 231, 232, 233, 234, 282, 283, 307, 310, 341, 342, 343, 356, 394, 395, 423, and 424 each coordinate NAD(+).

The protein belongs to the myo-inositol 1-phosphate synthase family. Homotrimer or homotetramer. Interacts with ATXR5 and ATXR6. It depends on NAD(+) as a cofactor. In terms of tissue distribution, expressed in siliques, leaves, roots, seed endosperm, but not in embryos. Highest expression in leaves, but restricted to vascular tissue in older leaves.

Its subcellular location is the cytoplasm. It is found in the cytosol. It localises to the nucleus. It catalyses the reaction D-glucose 6-phosphate = 1D-myo-inositol 3-phosphate. It functions in the pathway polyol metabolism; myo-inositol biosynthesis; myo-inositol from D-glucose 6-phosphate: step 1/2. Functionally, key enzyme in myo-inositol biosynthesis pathway that catalyzes the conversion of glucose 6-phosphate to 1-myo-inositol 1-phosphate in a NAD-dependent manner. Catalyzes the majority of myo-inositol synthesis required for plant growth and development. Acts as a repressor of programmed cell death and protects plant cells against cell death under high light intensity or long days. Controls its own transcription by inhibiting ATXR6 activity. Reduces the deposition of inhibitory histone marks on its own promoter. The sequence is that of Inositol-3-phosphate synthase isozyme 1 (IPS1) from Arabidopsis thaliana (Mouse-ear cress).